The sequence spans 205 residues: Small ribosomal subunit protein uS4 (205 aa).

The tract at residues 27–46 (LNKRDYAPGQHGQRRKGKPS) is disordered. The region spanning 118-178 (HGHVLVNGKR…HVDHRLMKGT (61 aa)) is the S4 RNA-binding domain.

The protein belongs to the universal ribosomal protein uS4 family. Part of the 30S ribosomal subunit. Contacts protein S5. The interaction surface between S4 and S5 is involved in control of translational fidelity.

Functionally, one of the primary rRNA binding proteins, it binds directly to 16S rRNA where it nucleates assembly of the body of the 30S subunit. In terms of biological role, with S5 and S12 plays an important role in translational accuracy. The protein is Small ribosomal subunit protein uS4 of Granulibacter bethesdensis (strain ATCC BAA-1260 / CGDNIH1).